The sequence spans 986 residues: Translation initiation factor IF-2 (986 aa).

Residues Lys75–Leu94 show a composition bias toward basic and acidic residues. Disordered stretches follow at residues Lys75–Leu105, Pro127–Pro148, Ser185–Asp258, and Gly277–Asp394. Composition is skewed to low complexity over residues Ser185 to Leu210 and Ser218 to Ile235. Residues Asp292–Val313 are compositionally biased toward basic and acidic residues. A compositionally biased stretch (low complexity) spans Ala315–Ser338. The span at Ala339–Lys348 shows a compositional bias: basic residues. The tr-type G domain maps to Thr483–Arg653. The G1 stretch occupies residues Gly492–Thr499. GTP is bound at residue Gly492–Thr499. Residues Gly517 to His521 are G2. The segment at Asp539–Gly542 is G3. Residues Asp539–His543 and Asn593–Asp596 each bind GTP. Residues Asn593 to Asp596 are G4. The tract at residues Ser629–Lys631 is G5.

It belongs to the TRAFAC class translation factor GTPase superfamily. Classic translation factor GTPase family. IF-2 subfamily.

The protein resides in the cytoplasm. Its function is as follows. One of the essential components for the initiation of protein synthesis. Protects formylmethionyl-tRNA from spontaneous hydrolysis and promotes its binding to the 30S ribosomal subunits. Also involved in the hydrolysis of GTP during the formation of the 70S ribosomal complex. This Pelodictyon phaeoclathratiforme (strain DSM 5477 / BU-1) protein is Translation initiation factor IF-2.